A 69-amino-acid chain; its full sequence is Sec-independent protein translocase protein TatA (69 aa).

The helical transmembrane segment at 1–21 (MFGLGGQELILILLIILLLFG) threads the bilayer.

Belongs to the TatA/E family. Forms a complex with TatC.

The protein localises to the cell inner membrane. Part of the twin-arginine translocation (Tat) system that transports large folded proteins containing a characteristic twin-arginine motif in their signal peptide across membranes. TatA could form the protein-conducting channel of the Tat system. This is Sec-independent protein translocase protein TatA from Pelodictyon phaeoclathratiforme (strain DSM 5477 / BU-1).